Here is a 491-residue protein sequence, read N- to C-terminus: Chromosomal replication initiator protein DnaA (491 aa).

The interval 1 to 68 (MTSIWGQIQH…RTAACGVIGD (68 aa)) is domain I, interacts with DnaA modulators. The interval 68 to 146 (DTVEVVVTAG…PLDWAPVPQS (79 aa)) is domain II. The interval 147 to 364 (RTNWRFSFDD…SCLHNLILKA (218 aa)) is domain III, AAA+ region. The ATP site is built by Gly190, Gly192, Lys193, and Thr194. The segment at 365 to 491 (KLLNRQISLE…RNGRITHARH (127 aa)) is domain IV, binds dsDNA.

It belongs to the DnaA family. In terms of assembly, oligomerizes as a right-handed, spiral filament on DNA at oriC.

It is found in the cytoplasm. Plays an essential role in the initiation and regulation of chromosomal replication. ATP-DnaA binds to the origin of replication (oriC) to initiate formation of the DNA replication initiation complex once per cell cycle. Binds the DnaA box (a 9 base pair repeat at the origin) and separates the double-stranded (ds)DNA. Forms a right-handed helical filament on oriC DNA; dsDNA binds to the exterior of the filament while single-stranded (ss)DNA is stabiized in the filament's interior. The ATP-DnaA-oriC complex binds and stabilizes one strand of the AT-rich DNA unwinding element (DUE), permitting loading of DNA polymerase. After initiation quickly degrades to an ADP-DnaA complex that is not apt for DNA replication. Binds acidic phospholipids. The polypeptide is Chromosomal replication initiator protein DnaA (Nitratidesulfovibrio vulgaris (strain ATCC 29579 / DSM 644 / CCUG 34227 / NCIMB 8303 / VKM B-1760 / Hildenborough) (Desulfovibrio vulgaris)).